A 389-amino-acid polypeptide reads, in one-letter code: NAD-dependent protein deacetylase sirtuin-2 (389 aa).

Residues 1–34 are disordered; the sequence is MAEPDPSHPLETQAGKVQEAQDSDSDSEGGAAGG. Position 2 is an N-acetylalanine (alanine 2). Serine 23, serine 25, serine 27, and serine 53 each carry phosphoserine. One can recognise a Deacetylase sirtuin-type domain in the interval 57 to 338; that stretch reads RLLDELTLEG…LALAELLGWK (282 aa). Residues 85-89 and 95-97 contribute to the NAD(+) site; these read AGIST and DFR. Serine 100 carries the phosphoserine modification. 167 to 170 is an NAD(+) binding site; it reads QNID. The active-site Proton acceptor is the histidine 187. Cysteine 195 and cysteine 200 together coordinate Zn(2+). Position 207 is a phosphoserine (serine 207). Cysteine 221 and cysteine 224 together coordinate Zn(2+). NAD(+) contacts are provided by residues 262 to 263, 286 to 288, and cysteine 324; these read TS and NKE. Positions 350 to 389 are disordered; sequence ASIDAQSGAEAPNPSTSASPRKSPPPAQDEARTTEREKPQ. 2 positions are modified to phosphoserine: serine 368 and serine 372. Residues 378-389 show a composition bias toward basic and acidic residues; sequence DEARTTEREKPQ.

The protein belongs to the sirtuin family. Class I subfamily. In terms of assembly, interacts with CDC20, FOXO3 and FZR1. Associates with microtubules in primary cortical mature neurons. Homotrimer. Interacts (via both phosphorylated, unphosphorylated, active or inactive forms) with HDAC6; the interaction is necessary for the complex to interact with alpha-tubulin, suggesting that these proteins belong to a large complex that deacetylates the cytoskeleton. Interacts with FOXO1; the interaction is disrupted upon serum-starvation or oxidative stress, leading to increased level of acetylated FOXO1 and induction of autophagy. Interacts with RELA; the interaction occurs in the cytoplasm and is increased in a TNF-alpha-dependent manner. Interacts with HOXA10; the interaction is direct. Interacts with YWHAB and YWHAG; the interactions occur in a AKT-dependent manner and increase SIRT2-dependent TP53 deacetylation. Interacts with MAPK1/ERK2 and MAPK3/ERK1; the interactions increase SIRT2 stability and deacetylation activity. Interacts (phosphorylated form) with KMT5A isoform 2; the interaction is direct, stimulates KMT5A-mediated methyltransferase activity on histone at 'Lys-20' (H4K20me1) and is increased in a H(2)O(2)-induced oxidative stress-dependent manner. Interacts with G6PD; the interaction is enhanced by H(2)O(2) treatment. Interacts with a G1/S-specific cyclin E-CDK2 complex. Interacts with AURKA, CDK5R1 (p35 form) and CDK5 and HIF1A. Interacts with the tRNA ligase SARS1; recruited to the VEGFA promoter via interaction with SARS1. Interacts with BEX4; negatively regulates alpha-tubulin deacetylation by SIRT2. Zn(2+) is required as a cofactor. In terms of processing, phosphorylated at phosphoserine and phosphothreonine. Phosphorylated at Ser-368 by a mitotic kinase CDK1/cyclin B at the G2/M transition; phosphorylation regulates the delay in cell-cycle progression. Phosphorylated at Ser-368 by a mitotic kinase G1/S-specific cyclin E/Cdk2 complex; phosphorylation inactivates SIRT2-mediated alpha-tubulin deacetylation and thereby negatively regulates cell adhesion, cell migration and neurite outgrowth during neuronal differentiation. Phosphorylated by cyclin A/Cdk2 and p35-Cdk5 complexes and to a lesser extent by the cyclin D3/Cdk4 and cyclin B/Cdk1, in vitro. Dephosphorylated at Ser-368 by CDC14A and CDC14B around early anaphase. Post-translationally, acetylated by EP300; acetylation leads both to the decreased of SIRT2-mediated alpha-tubulin deacetylase activity and SIRT2-mediated down-regulation of TP53 transcriptional activity. Ubiquitinated.

Its subcellular location is the nucleus. The protein localises to the cytoplasm. The protein resides in the perinuclear region. It localises to the cytoskeleton. It is found in the microtubule organizing center. Its subcellular location is the centrosome. The protein localises to the centriole. The protein resides in the spindle. It localises to the midbody. It is found in the chromosome. Its subcellular location is the perikaryon. The protein localises to the cell projection. The protein resides in the growth cone. It localises to the myelin membrane. It carries out the reaction N(6)-acetyl-L-lysyl-[protein] + NAD(+) + H2O = 2''-O-acetyl-ADP-D-ribose + nicotinamide + L-lysyl-[protein]. It catalyses the reaction N(6)-tetradecanoyl-L-lysyl-[protein] + NAD(+) + H2O = 2''-O-tetradecanoyl-ADP-D-ribose + nicotinamide + L-lysyl-[protein]. The catalysed reaction is N(6)-hexadecanoyl-L-lysyl-[protein] + NAD(+) + H2O = 2''-O-hexadecanoyl-ADP-D-ribose + nicotinamide + L-lysyl-[protein]. Its activity is regulated as follows. Inhibited by Sirtinol, A3 and M15 small molecules. Inhibited by nicotinamide. NAD-dependent protein deacetylase, which deacetylates internal lysines on histone and alpha-tubulin as well as many other proteins such as key transcription factors. Participates in the modulation of multiple and diverse biological processes such as cell cycle control, genomic integrity, microtubule dynamics, cell differentiation, metabolic networks, and autophagy. Plays a major role in the control of cell cycle progression and genomic stability. Functions in the antephase checkpoint preventing precocious mitotic entry in response to microtubule stress agents, and hence allowing proper inheritance of chromosomes. Positively regulates the anaphase promoting complex/cyclosome (APC/C) ubiquitin ligase complex activity by deacetylating CDC20 and FZR1, then allowing progression through mitosis. Associates both with chromatin at transcriptional start sites (TSSs) and enhancers of active genes. Plays a role in cell cycle and chromatin compaction through epigenetic modulation of the regulation of histone H4 'Lys-20' methylation (H4K20me1) during early mitosis. Specifically deacetylates histone H4 at 'Lys-16' (H4K16ac) between the G2/M transition and metaphase enabling H4K20me1 deposition by KMT5A leading to ulterior levels of H4K20me2 and H4K20me3 deposition throughout cell cycle, and mitotic S-phase progression. Deacetylates KMT5A modulating KMT5A chromatin localization during the mitotic stress response. Also deacetylates histone H3 at 'Lys-57' (H3K56ac) during the mitotic G2/M transition. During oocyte meiosis progression, may deacetylate histone H4 at 'Lys-16' (H4K16ac) and alpha-tubulin, regulating spindle assembly and chromosome alignment by influencing microtubule dynamics and kinetochore function. Deacetylates histone H4 at 'Lys-16' (H4K16ac) at the VEGFA promoter and thereby contributes to regulate expression of VEGFA, a key regulator of angiogenesis. Deacetylates alpha-tubulin at 'Lys-40' and hence controls neuronal motility, oligodendroglial cell arbor projection processes and proliferation of non-neuronal cells. Phosphorylation at Ser-368 by a G1/S-specific cyclin E-CDK2 complex inactivates SIRT2-mediated alpha-tubulin deacetylation, negatively regulating cell adhesion, cell migration and neurite outgrowth during neuronal differentiation. Deacetylates PARD3 and participates in the regulation of Schwann cell peripheral myelination formation during early postnatal development and during postinjury remyelination. Involved in several cellular metabolic pathways. Plays a role in the regulation of blood glucose homeostasis by deacetylating and stabilizing phosphoenolpyruvate carboxykinase PCK1 activity in response to low nutrient availability. Acts as a key regulator in the pentose phosphate pathway (PPP) by deacetylating and activating the glucose-6-phosphate G6PD enzyme, and therefore, stimulates the production of cytosolic NADPH to counteract oxidative damage. Maintains energy homeostasis in response to nutrient deprivation as well as energy expenditure by inhibiting adipogenesis and promoting lipolysis. Attenuates adipocyte differentiation by deacetylating and promoting FOXO1 interaction to PPARG and subsequent repression of PPARG-dependent transcriptional activity. Plays a role in the regulation of lysosome-mediated degradation of protein aggregates by autophagy in neuronal cells. Deacetylates FOXO1 in response to oxidative stress or serum deprivation, thereby negatively regulating FOXO1-mediated autophagy. Deacetylates a broad range of transcription factors and co-regulators regulating target gene expression. Deacetylates transcriptional factor FOXO3 stimulating the ubiquitin ligase SCF(SKP2)-mediated FOXO3 ubiquitination and degradation. Deacetylates HIF1A and therefore promotes HIF1A degradation and inhibition of HIF1A transcriptional activity in tumor cells in response to hypoxia. Deacetylates RELA in the cytoplasm inhibiting NF-kappaB-dependent transcription activation upon TNF-alpha stimulation. Inhibits transcriptional activation by deacetylating p53/TP53 and EP300. Also deacetylates EIF5A. Functions as a negative regulator on oxidative stress-tolerance in response to anoxia-reoxygenation conditions. Plays a role as tumor suppressor. In addition to protein deacetylase activity, also has activity toward long-chain fatty acyl groups and mediates protein-lysine demyristoylation and depalmitoylation of target proteins, such as ARF6 and KRAS, thereby regulating their association with membranes. This is NAD-dependent protein deacetylase sirtuin-2 (SIRT2) from Macaca fascicularis (Crab-eating macaque).